The following is a 341-amino-acid chain: Enduracididine beta-hydroxylase (341 aa).

Residues His-146 and Glu-148 each contribute to the Fe cation site. The tract at residues 203 to 223 is disordered; sequence HRIHGKAPGDESARESALRER. His-300 contributes to the Fe cation binding site.

Belongs to the clavaminate synthase family. Fe(2+) serves as cofactor.

The catalysed reaction is L-enduracididine + 2-oxoglutarate + O2 = (3S)-3-hydroxy-L-enduracididine + succinate + CO2. The protein operates within antibiotic biosynthesis. Functionally, hydroxylates the beta carbon of free L-enduracididine to produce (3S)-3-hydroxy-L-enduracididine in biosynthesis of the nonproteinogenic amino acid beta-hydroxyenduracididine, a component of antibiotic mannopeptimycin. The sequence is that of Enduracididine beta-hydroxylase (mppO) from Streptomyces hygroscopicus.